Consider the following 47-residue polypeptide: Zinc-finger protein TK0143 (47 aa).

Residues 18–41 (FRCPRCGMVFRSAKAYTRHVNKAH) form a C2H2-type zinc finger. Positions 20, 23, 36, and 41 each coordinate Zn(2+).

As to quaternary structure, crystallized in association with 70S ribosomes. The cofactor is Zn(2+).

In Thermococcus kodakarensis (strain ATCC BAA-918 / JCM 12380 / KOD1) (Pyrococcus kodakaraensis (strain KOD1)), this protein is Zinc-finger protein TK0143.